Here is a 109-residue protein sequence, read N- to C-terminus: Putative transporter-like protein YIL171W (109 aa).

Polar residues predominate over residues 1–22 (MSGVNNTSANDLSTTESNSNSA). Residues 1 to 40 (MSGVNNTSANDLSTTESNSNSAVGAPSVKTEHGDSKDSLN) form a disordered region. The Cytoplasmic segment spans residues 1–56 (MSGVNNTSANDLSTTESNSNSAVGAPSVKTEHGDSKDSLNLDATEAPIDLPQKPLS). The segment covering 29 to 39 (KTEHGDSKDSL) has biased composition (basic and acidic residues). Residues 57–77 (AYTTVAILCLMIAFGGFIFGW) form a helical membrane-spanning segment. Residues 78–109 (DTGTISGFVNLSDFIRRFGQKKTTRGLTTYRK) lie on the Extracellular side of the membrane. N-linked (GlcNAc...) asparagine glycosylation is present at Asn87.

Belongs to the major facilitator superfamily. Sugar transporter (TC 2.A.1.1) family.

It is found in the cell membrane. Functionally, probable glucose transporter. The chain is Putative transporter-like protein YIL171W from Saccharomyces cerevisiae (strain ATCC 204508 / S288c) (Baker's yeast).